The sequence spans 149 residues: Large ribosomal subunit protein bL9 (149 aa).

Residue lysine 89 is modified to N6-acetyllysine.

It belongs to the bacterial ribosomal protein bL9 family.

Functionally, binds to the 23S rRNA. The chain is Large ribosomal subunit protein bL9 from Shigella dysenteriae serotype 1 (strain Sd197).